The following is a 688-amino-acid chain: T-box transcription factor TBX2-A (688 aa).

The segment at residues 104-277 is a DNA-binding region (T-box); it reads LWDQFHKIGT…NNPFAKGFRD (174 aa). Disordered stretches follow at residues 301-436 and 606-688; these read CKAD…GSLS and PSTN…ETPK. 3 stretches are compositionally biased toward basic and acidic residues: residues 340 to 361, 378 to 403, and 412 to 430; these read NNREEKFGADSDQELDRREIRS, RLEDRGKDKSTPEKKSDSPESRKDGS, and SLEKDKAESRRKEDSKSDP. Residues 621–636 show a composition bias toward low complexity; it reads PGSESSKPGSSRESSP. The stretch at 655 to 679 forms a coiled coil; that stretch reads ASMKDSINELQNIQRLVSGLESQRE. The span at 676-688 shows a compositional bias: basic and acidic residues; that stretch reads SQREISPGRETPK.

As to quaternary structure, binds DNA as a monomer.

The protein resides in the nucleus. Its function is as follows. Transcription factor which acts as a transcriptional repressor. May also function as a transcriptional activator. Binds to the palindromic T site 5'-TTCACACCTAGGTGTGAA-3' DNA sequence, or a half-site, which are present in the regulatory region of several genes. The sequence is that of T-box transcription factor TBX2-A (tbx2-a) from Xenopus laevis (African clawed frog).